The following is a 157-amino-acid chain: 6,7-dimethyl-8-ribityllumazine synthase (157 aa).

5-amino-6-(D-ribitylamino)uracil is bound by residues F22, 57–59 (AYE), and 81–83 (TVI). 86–87 (GT) lines the (2S)-2-hydroxy-3-oxobutyl phosphate pocket. H89 acts as the Proton donor in catalysis. F114 contacts 5-amino-6-(D-ribitylamino)uracil. Position 128 (R128) interacts with (2S)-2-hydroxy-3-oxobutyl phosphate.

It belongs to the DMRL synthase family. As to quaternary structure, forms an icosahedral capsid composed of 60 subunits, arranged as a dodecamer of pentamers.

The catalysed reaction is (2S)-2-hydroxy-3-oxobutyl phosphate + 5-amino-6-(D-ribitylamino)uracil = 6,7-dimethyl-8-(1-D-ribityl)lumazine + phosphate + 2 H2O + H(+). It participates in cofactor biosynthesis; riboflavin biosynthesis; riboflavin from 2-hydroxy-3-oxobutyl phosphate and 5-amino-6-(D-ribitylamino)uracil: step 1/2. Catalyzes the formation of 6,7-dimethyl-8-ribityllumazine by condensation of 5-amino-6-(D-ribitylamino)uracil with 3,4-dihydroxy-2-butanone 4-phosphate. This is the penultimate step in the biosynthesis of riboflavin. This Haemophilus influenzae (strain ATCC 51907 / DSM 11121 / KW20 / Rd) protein is 6,7-dimethyl-8-ribityllumazine synthase.